The primary structure comprises 338 residues: tRNA N6-adenosine threonylcarbamoyltransferase (338 aa).

2 residues coordinate Fe cation: His-114 and His-118. Residues 137–141 (IVSGG), Asp-170, Gly-183, Asp-187, and Asn-277 each bind substrate. A Fe cation-binding site is contributed by Asp-305.

Belongs to the KAE1 / TsaD family. Fe(2+) is required as a cofactor.

Its subcellular location is the cytoplasm. The catalysed reaction is L-threonylcarbamoyladenylate + adenosine(37) in tRNA = N(6)-L-threonylcarbamoyladenosine(37) in tRNA + AMP + H(+). Its function is as follows. Required for the formation of a threonylcarbamoyl group on adenosine at position 37 (t(6)A37) in tRNAs that read codons beginning with adenine. Is involved in the transfer of the threonylcarbamoyl moiety of threonylcarbamoyl-AMP (TC-AMP) to the N6 group of A37, together with TsaE and TsaB. TsaD likely plays a direct catalytic role in this reaction. The sequence is that of tRNA N6-adenosine threonylcarbamoyltransferase from Clostridioides difficile (strain 630) (Peptoclostridium difficile).